Here is a 170-residue protein sequence, read N- to C-terminus: Peptide deformylase (170 aa).

The Fe cation site is built by cysteine 91 and histidine 133. Glutamate 134 is an active-site residue. Histidine 137 is a Fe cation binding site.

This sequence belongs to the polypeptide deformylase family. Fe(2+) serves as cofactor.

The enzyme catalyses N-terminal N-formyl-L-methionyl-[peptide] + H2O = N-terminal L-methionyl-[peptide] + formate. Functionally, removes the formyl group from the N-terminal Met of newly synthesized proteins. Requires at least a dipeptide for an efficient rate of reaction. N-terminal L-methionine is a prerequisite for activity but the enzyme has broad specificity at other positions. This is Peptide deformylase from Yersinia enterocolitica serotype O:8 / biotype 1B (strain NCTC 13174 / 8081).